The sequence spans 147 residues: Prefoldin subunit alpha (147 aa).

It belongs to the prefoldin alpha subunit family. In terms of assembly, heterohexamer of two alpha and four beta subunits.

It is found in the cytoplasm. In terms of biological role, molecular chaperone capable of stabilizing a range of proteins. Seems to fulfill an ATP-independent, HSP70-like function in archaeal de novo protein folding. The sequence is that of Prefoldin subunit alpha from Saccharolobus islandicus (strain Y.N.15.51 / Yellowstone #2) (Sulfolobus islandicus).